Consider the following 809-residue polypeptide: Phenylalanine--tRNA ligase beta subunit (809 aa).

Positions 39–152 (KDKWPNVYVG…ADAPVGMLAS (114 aa)) constitute a tRNA-binding domain. The B5 domain maps to 404–492 (KDRNSVVLSL…RIAGYDTIPC (89 aa)). Positions 470, 476, 479, and 480 each coordinate Mg(2+). The FDX-ACB domain maps to 717–808 (NRFPSVERDL…LNTETGAVLR (92 aa)).

It belongs to the phenylalanyl-tRNA synthetase beta subunit family. Type 1 subfamily. In terms of assembly, tetramer of two alpha and two beta subunits. Mg(2+) is required as a cofactor.

The protein resides in the cytoplasm. The enzyme catalyses tRNA(Phe) + L-phenylalanine + ATP = L-phenylalanyl-tRNA(Phe) + AMP + diphosphate + H(+). This is Phenylalanine--tRNA ligase beta subunit from Dehalococcoides mccartyi (strain ATCC BAA-2266 / KCTC 15142 / 195) (Dehalococcoides ethenogenes (strain 195)).